Reading from the N-terminus, the 230-residue chain is Ion-translocating oxidoreductase complex subunit E (230 aa).

A run of 6 helical transmembrane segments spans residues 18–38 (ALVQ…ATNA), 39–59 (LGLG…VSAL), 63–83 (TPAE…VSAV), 86–106 (LINA…PLIV), 125–145 (WLSA…MFVL), and 182–202 (PFLL…MLAV).

This sequence belongs to the NqrDE/RnfAE family. In terms of assembly, the complex is composed of six subunits: RsxA, RsxB, RsxC, RsxD, RsxE and RsxG.

It is found in the cell inner membrane. Part of a membrane-bound complex that couples electron transfer with translocation of ions across the membrane. Required to maintain the reduced state of SoxR. The chain is Ion-translocating oxidoreductase complex subunit E from Salmonella dublin (strain CT_02021853).